Here is a 172-residue protein sequence, read N- to C-terminus: MSSARESQARHGLKRAASPDGSGSWQAADLGNEERKQKFLRLMGAGKKEHTGRLVIGDHRSTSHFRTGEEDKKMNEELESQYQQSMDSTMSGRNRRHCGLGFSEFQEGEEEAAGHSSDHESSEDSESGSDSKQDESAEELQAAETHDEAAVPETKKEAKSNYKMMFVKASGS.

Positions 1 to 160 (MSSARESQAR…VPETKKEAKS (160 aa)) are disordered. A compositionally biased stretch (basic and acidic residues) spans 46–76 (GKKEHTGRLVIGDHRSTSHFRTGEEDKKMNE). Polar residues predominate over residues 80–92 (SQYQQSMDSTMSG). 2 stretches are compositionally biased toward basic and acidic residues: residues 112 to 122 (AAGHSSDHESS) and 144 to 160 (ETHD…EAKS).

Belongs to the SMAP family. As to expression, expressed in brain, heart, eye, liver, kidney and skeletal muscle.

The sequence is that of Small acidic protein (SMAP) from Gallus gallus (Chicken).